Reading from the N-terminus, the 502-residue chain is Galactose/methyl galactoside import ATP-binding protein MglA (502 aa).

2 consecutive ABC transporter domains span residues 10 to 245 (LEMT…VGRE) and 255 to 502 (NEPK…SRYL). An ATP-binding site is contributed by 42 to 49 (GENGAGKS).

It belongs to the ABC transporter superfamily. Galactose/methyl galactoside importer (TC 3.A.1.2.3) family. In terms of assembly, the complex is composed of one ATP-binding protein (MglA), two transmembrane proteins (MglC) and a solute-binding protein (MglB).

It is found in the cell inner membrane. The enzyme catalyses D-galactose(out) + ATP + H2O = D-galactose(in) + ADP + phosphate + H(+). It catalyses the reaction methyl beta-D-galactoside(out) + ATP + H2O = methyl beta-D-galactoside(in) + ADP + phosphate + H(+). Part of the ABC transporter complex MglABC involved in galactose/methyl galactoside import. Responsible for energy coupling to the transport system. The polypeptide is Galactose/methyl galactoside import ATP-binding protein MglA (Vibrio cholerae serotype O1 (strain ATCC 39315 / El Tor Inaba N16961)).